The primary structure comprises 450 residues: Phosphoglucosamine mutase (450 aa).

S101 serves as the catalytic Phosphoserine intermediate. 4 residues coordinate Mg(2+): S101, D241, D243, and D245. Position 101 is a phosphoserine (S101).

The protein belongs to the phosphohexose mutase family. Mg(2+) is required as a cofactor. Activated by phosphorylation.

The enzyme catalyses alpha-D-glucosamine 1-phosphate = D-glucosamine 6-phosphate. In terms of biological role, catalyzes the conversion of glucosamine-6-phosphate to glucosamine-1-phosphate. This chain is Phosphoglucosamine mutase, found in Lysinibacillus sphaericus (strain C3-41).